The primary structure comprises 434 residues: Putative MgpC-like protein MPN_149 (434 aa).

Disordered regions lie at residues 168-193 and 215-267; these read GSGQ…PKAV and EPLD…DNNG. A compositionally biased stretch (polar residues) spans 170-184; sequence GQESSWNSQRSQKVL. Residues 218–229 are compositionally biased toward basic and acidic residues; it reads DSTKDGKGKDES. Polar residues predominate over residues 248–267; the sequence is STGSQMAAVTDSQQSGDNNG.

This sequence belongs to the MgpC family.

The protein is Putative MgpC-like protein MPN_149 of Mycoplasma pneumoniae (strain ATCC 29342 / M129 / Subtype 1) (Mycoplasmoides pneumoniae).